Here is a 261-residue protein sequence, read N- to C-terminus: Immediate-early protein IE-0 (261 aa).

The segment at Cys-212–Arg-257 adopts an RING-type zinc-finger fold.

As to quaternary structure, interacts with proteins C42 and FP25. Interacts with host beta-tubulin. Interacts with Ac66 and vUb.

Its subcellular location is the host nucleus. It localises to the host cytoplasm. It is found in the virion. Putative viral E3 ligase that plays an essential regulatory role in both viral DNA replication and transcriptional transactivation. The role in transcription has been shown to include activation of gene expression from early viral promoters. Also promotes the efficient egress of nucleocapsids from the host nucleus. May act as an E3 ligase that promotes ubiquitination of nucleocapsids proteins by vUbi and subsequent viral egress for the host nucleus. In Lepidoptera (butterflies and moths), this protein is Immediate-early protein IE-0 (IE0).